Reading from the N-terminus, the 494-residue chain is Cytochrome P450 2C23 (494 aa).

The residue at position 131 (serine 131) is a Phosphoserine. N6-acetyllysine occurs at positions 253 and 379. A heme-binding site is contributed by cysteine 439.

Belongs to the cytochrome P450 family. It depends on heme as a cofactor. Expressed in kidney and liver. Expressed in cortical tubules of kidney (at protein level).

It localises to the endoplasmic reticulum membrane. The protein localises to the microsome membrane. It catalyses the reaction (5Z,8Z,11Z,14Z)-eicosatetraenoate + reduced [NADPH--hemoprotein reductase] + O2 = (8R,9S)-epoxy-(5Z,11Z,14Z)-eicosatrienoate + oxidized [NADPH--hemoprotein reductase] + H2O + H(+). The catalysed reaction is (5Z,8Z,11Z,14Z)-eicosatetraenoate + reduced [NADPH--hemoprotein reductase] + O2 = (11R,12S)-epoxy-(5Z,8Z,14Z)-eicosatrienoate + oxidized [NADPH--hemoprotein reductase] + H2O + H(+). It carries out the reaction (5Z,8Z,11Z,14Z)-eicosatetraenoate + reduced [NADPH--hemoprotein reductase] + O2 = (11S,12R)-epoxy-(5Z,8Z,14Z)-eicosatrienoate + oxidized [NADPH--hemoprotein reductase] + H2O + H(+). The enzyme catalyses (5Z,8Z,11Z,14Z)-eicosatetraenoate + reduced [NADPH--hemoprotein reductase] + O2 = (14R,15S)-epoxy-(5Z,8Z,11Z)-eicosatrienoate + oxidized [NADPH--hemoprotein reductase] + H2O + H(+). It catalyses the reaction (5Z,8Z,11Z,14Z)-eicosatetraenoate + reduced [NADPH--hemoprotein reductase] + O2 = (14S,15R)-epoxy-(5Z,8Z,11Z)-eicosatrienoate + oxidized [NADPH--hemoprotein reductase] + H2O + H(+). The catalysed reaction is (5Z,8Z,11Z,14Z,17Z)-eicosapentaenoate + reduced [NADPH--hemoprotein reductase] + O2 = 8,9-epoxy-(5Z,11Z,14Z,17Z)-eicosatetraenoate + oxidized [NADPH--hemoprotein reductase] + H2O + H(+). It carries out the reaction (5Z,8Z,11Z,14Z,17Z)-eicosapentaenoate + reduced [NADPH--hemoprotein reductase] + O2 = 11,12-epoxy-(5Z,8Z,14Z,17Z)-eicosatetraenoate + oxidized [NADPH--hemoprotein reductase] + H2O + H(+). The enzyme catalyses (5Z,8Z,11Z,14Z,17Z)-eicosapentaenoate + reduced [NADPH--hemoprotein reductase] + O2 = 14,15-epoxy-(5Z,8Z,11Z,17Z)-eicosatetraenoate + oxidized [NADPH--hemoprotein reductase] + H2O + H(+). It catalyses the reaction (5Z,8Z,11Z,14Z,17Z)-eicosapentaenoate + reduced [NADPH--hemoprotein reductase] + O2 = (17R,18S)-epoxy-(5Z,8Z,11Z,14Z)-eicosatetraenoate + oxidized [NADPH--hemoprotein reductase] + H2O + H(+). The catalysed reaction is (5Z,8Z,11Z,14Z,17Z)-eicosapentaenoate + reduced [NADPH--hemoprotein reductase] + O2 = (17S,18R)-epoxy-(5Z,8Z,11Z,14Z)-eicosatetraenoate + oxidized [NADPH--hemoprotein reductase] + H2O + H(+). It carries out the reaction 20-hydroxy-(5Z,8Z,11Z,14Z)-eicosatetraenoate + reduced [NADPH--hemoprotein reductase] + O2 = 20-hydroxy-8,9-epoxy-(5Z,11Z,14Z)-eicosatrienoate + oxidized [NADPH--hemoprotein reductase] + H2O + H(+). It functions in the pathway lipid metabolism; arachidonate metabolism. Its function is as follows. A cytochrome P450 monooxygenase involved in polyunsaturated fatty acids (PUFAs) metabolism and signaling. Catalyzes preferentially the epoxidation of double bonds of PUFAs. Converts arachidonic acid (ARA, C20:4(n-6)) primarily to stereospecific products 8R,9S-, 11R,12S-, and 14S,15R-EET. Plays a major role in the formation of EETs and hydroxy-EETs (HEETs) in kidney. Via EETs may inhibit the epithelial sodium channels (ENaCs) in nephron segments, preventing excessive sodium absorption during high dietary salt intake. Participates in the formation of anti-inflammatory hydroxyepoxyeicosatrienoic acids (HEETs) by converting 20-hydroxyeicosatetraenoic acid (20-HETE) to 20,8,9-HEET, an activator of PPARA. Metabolizes eicosapentaenoic acid (EPA, C20:5(n-3)) to epoxyeicosatetraenoic acid (EETeTr) regioisomers, 8,9-, 11,12-, 14,15-, and 17,18-EETeTr, preferentially producing 17R,18S enantiomer. Mechanistically, uses molecular oxygen inserting one oxygen atom into a substrate, and reducing the second into a water molecule, with two electrons provided by NADPH via cytochrome P450 reductase (NADPH--hemoprotein reductase). This Rattus norvegicus (Rat) protein is Cytochrome P450 2C23.